The sequence spans 351 residues: Methylthioribose-1-phosphate isomerase (351 aa).

Residues 51-53 (RGA), R94, and Q199 contribute to the substrate site. The active-site Proton donor is the D240. Residue 250–251 (NK) coordinates substrate.

The protein belongs to the eIF-2B alpha/beta/delta subunits family. MtnA subfamily. In terms of assembly, homodimer.

The catalysed reaction is 5-(methylsulfanyl)-alpha-D-ribose 1-phosphate = 5-(methylsulfanyl)-D-ribulose 1-phosphate. It participates in amino-acid biosynthesis; L-methionine biosynthesis via salvage pathway; L-methionine from S-methyl-5-thio-alpha-D-ribose 1-phosphate: step 1/6. Catalyzes the interconversion of methylthioribose-1-phosphate (MTR-1-P) into methylthioribulose-1-phosphate (MTRu-1-P). This is Methylthioribose-1-phosphate isomerase from Bacillus cereus (strain ATCC 10987 / NRS 248).